The primary structure comprises 879 residues: Oxysterol-binding protein-related protein 5 (879 aa).

Positions 1–73 (MKEEAFLRRR…TPSSATKVPP (73 aa)) are disordered. Ser12 is modified (phosphoserine). The stretch at 93–123 (VTKKETLKAQKENYRQEKKRATRQLLSALTD) forms a coiled coil. The region spanning 126–243 (VVIMADSLKI…WLDALELALR (118 aa)) is the PH domain. Residues 254–341 (KPGRDGEPGT…TPGAPVRRGT (88 aa)) form a disordered region. Composition is skewed to basic and acidic residues over residues 300–309 (FSDKSERENP) and 316–325 (TQDHSRKTES). Residues 384-389 (LSRVVL), 446-449 (KPYN), and 478-479 (HH) each bind a 1,2-diacyl-sn-glycero-3-phospho-(1D-myo-inositol 4-phosphate). A 1,2-diacyl-sn-glycero-3-phospho-L-serine-binding positions include 384-389 (LSRVVL) and Asn449. Ser504 serves as a coordination point for a 1,2-diacyl-sn-glycero-3-phospho-L-serine. The a 1,2-diacyl-sn-glycero-3-phospho-(1D-myo-inositol 4-phosphate) site is built by Lys670, Glu674, and Arg678. The interval 742–806 (TTFLGSPGPR…FVPGGESPCP (65 aa)) is disordered. At Ser747 the chain carries Phosphoserine. The segment covering 750-765 (PRHERSGPDQRLRKAS) has biased composition (basic and acidic residues). Residues 766-783 (DQPSGHSQATESSGSTPE) show a composition bias toward polar residues. Residues 860-878 (SWFLLCVFLACQLFINHIL) form a helical membrane-spanning segment.

Belongs to the OSBP family. Ubiquitously expressed.

It is found in the endoplasmic reticulum membrane. Its function is as follows. Lipid transporter involved in lipid countertransport between the endoplasmic reticulum and the plasma membrane: specifically exchanges phosphatidylserine with phosphatidylinositol 4-phosphate (PI4P), delivering phosphatidylserine to the plasma membrane in exchange for PI4P, which is degraded by the SAC1/SACM1L phosphatase in the endoplasmic reticulum. Binds phosphatidylserine and PI4P in a mutually exclusive manner. May cooperate with NPC1 to mediate the exit of cholesterol from endosomes/lysosomes. Binds 25-hydroxycholesterol and cholesterol. The chain is Oxysterol-binding protein-related protein 5 (OSBPL5) from Homo sapiens (Human).